The primary structure comprises 773 residues: LON peptidase N-terminal domain and RING finger protein 1 (773 aa).

The interval 1–29 is disordered; it reads MSSPAVARTSPGGSREMAPAPQGRGRFWE. Residues 48–81 form a TPR 1 repeat; it reads WELLLRRGELLALGGHLKGALEAFAAALRRGAPA. Residues 123–159 form an RING-type 1 zinc finger; that stretch reads CLGCRGFLSEPVTVPCGHSYCRRCLRRELRARCRLCR. TPR repeat units follow at residues 212–244, 246–278, and 279–312; these read ARAAGRLGELLHQGRYREALAAACEALRAEPSD, IVKIYRAESYAGLQEFKAAIEDLNAVLFQLPDW, and PEVYFRKGKVLCDAGFLGDALQLFLQCLALDEDF. Positions 359–370 are enriched in polar residues; the sequence is EESQSLNEPSPK. Residues 359-388 form a disordered region; sequence EESQSLNEPSPKQSEEIPEVTSEPVKGSLN. At serine 431 the chain carries Phosphoserine. The RING-type 2 zinc-finger motif lies at 479–517; it reads CSLCMRLFFEPVTTPCGHSFCKNCLERCLDHAPYCPLCK. Residues 558-768 form the Lon N-terminal domain; the sequence is TAELSHLTKN…KIQHILTYFS (211 aa).

The sequence is that of LON peptidase N-terminal domain and RING finger protein 1 (LONRF1) from Homo sapiens (Human).